Consider the following 1420-residue polypeptide: DNA-directed RNA polymerase subunit beta' (1420 aa).

C71, C73, C86, and C89 together coordinate Zn(2+). 3 residues coordinate Mg(2+): D461, D463, and D465. Zn(2+)-binding residues include C815, C889, C896, and C899.

This sequence belongs to the RNA polymerase beta' chain family. As to quaternary structure, the RNAP catalytic core consists of 2 alpha, 1 beta, 1 beta' and 1 omega subunit. When a sigma factor is associated with the core the holoenzyme is formed, which can initiate transcription. Mg(2+) serves as cofactor. It depends on Zn(2+) as a cofactor.

It carries out the reaction RNA(n) + a ribonucleoside 5'-triphosphate = RNA(n+1) + diphosphate. Functionally, DNA-dependent RNA polymerase catalyzes the transcription of DNA into RNA using the four ribonucleoside triphosphates as substrates. The chain is DNA-directed RNA polymerase subunit beta' from Haemophilus ducreyi (strain 35000HP / ATCC 700724).